The sequence spans 485 residues: Glutamyl-tRNA(Gln) amidotransferase subunit A (485 aa).

Residues Lys78 and Ser153 each act as charge relay system in the active site. The active-site Acyl-ester intermediate is Ser177.

It belongs to the amidase family. GatA subfamily. As to quaternary structure, heterotrimer of A, B and C subunits.

The catalysed reaction is L-glutamyl-tRNA(Gln) + L-glutamine + ATP + H2O = L-glutaminyl-tRNA(Gln) + L-glutamate + ADP + phosphate + H(+). Functionally, allows the formation of correctly charged Gln-tRNA(Gln) through the transamidation of misacylated Glu-tRNA(Gln) in organisms which lack glutaminyl-tRNA synthetase. The reaction takes place in the presence of glutamine and ATP through an activated gamma-phospho-Glu-tRNA(Gln). This is Glutamyl-tRNA(Gln) amidotransferase subunit A from Lawsonia intracellularis (strain PHE/MN1-00).